The primary structure comprises 272 residues: Phosphate import ATP-binding protein PstB (272 aa).

The ABC transporter domain occupies 26 to 267 (LEIRNLDLRY…PKKRKTEDYI (242 aa)). 58 to 65 (GPSGCGKS) serves as a coordination point for ATP.

This sequence belongs to the ABC transporter superfamily. Phosphate importer (TC 3.A.1.7) family. In terms of assembly, the complex is composed of two ATP-binding proteins (PstB), two transmembrane proteins (PstC and PstA) and a solute-binding protein (PstS).

It localises to the cell inner membrane. The catalysed reaction is phosphate(out) + ATP + H2O = ADP + 2 phosphate(in) + H(+). In terms of biological role, part of the ABC transporter complex PstSACB involved in phosphate import. Responsible for energy coupling to the transport system. In Shewanella frigidimarina (strain NCIMB 400), this protein is Phosphate import ATP-binding protein PstB.